A 197-amino-acid polypeptide reads, in one-letter code: uncharacterized protein (197 aa).

A disordered region spans residues methionine 1–aspartate 31. A phosphoserine mark is found at serine 11 and serine 23. The span at serine 14 to aspartate 31 shows a compositional bias: basic and acidic residues. Glycyl lysine isopeptide (Lys-Gly) (interchain with G-Cter in ubiquitin) cross-links involve residues lysine 26 and lysine 32. The tract at residues valine 157 to lysine 197 is disordered. Positions glycine 158–valine 177 are enriched in polar residues. Residues lysine 184 to lysine 197 show a composition bias toward basic residues.

It to yeast YGR273c.

This is an uncharacterized protein from Saccharomyces cerevisiae (strain ATCC 204508 / S288c) (Baker's yeast).